A 120-amino-acid chain; its full sequence is NAD(P)H-quinone oxidoreductase subunit 3 (120 aa).

3 helical membrane-spanning segments follow: residues 6-26 (GYEYFLGFLLISGAVPILALT), 64-84 (MFALVFVIFDVETVFLYPWAV), and 89-109 (LGLLAFIEALVFITILVVALA).

It belongs to the complex I subunit 3 family. In terms of assembly, NDH-1 can be composed of about 15 different subunits; different subcomplexes with different compositions have been identified which probably have different functions.

It is found in the cellular thylakoid membrane. The catalysed reaction is a plastoquinone + NADH + (n+1) H(+)(in) = a plastoquinol + NAD(+) + n H(+)(out). The enzyme catalyses a plastoquinone + NADPH + (n+1) H(+)(in) = a plastoquinol + NADP(+) + n H(+)(out). In terms of biological role, NDH-1 shuttles electrons from an unknown electron donor, via FMN and iron-sulfur (Fe-S) centers, to quinones in the respiratory and/or the photosynthetic chain. The immediate electron acceptor for the enzyme in this species is believed to be plastoquinone. Couples the redox reaction to proton translocation, and thus conserves the redox energy in a proton gradient. Cyanobacterial NDH-1 also plays a role in inorganic carbon-concentration. The chain is NAD(P)H-quinone oxidoreductase subunit 3 from Prochlorococcus marinus (strain NATL1A).